The primary structure comprises 845 residues: MVEGKGFLVSSVTELHRKEKQKKKGKSGGFESLNLGPNVFNAIKKKGYKVPTPIQRKTMPLILSGVDVVAMARTGSGKTAAFLIPMLEKLKQHVPQGGVRALILSPTRDLAEQTLKFTKELGKFTDLRVSLLVGGDSMEDQFEELTKGPDVIIATPGRLMHLLSEVDDMTLRTVEYVVFDEADSLFGMGFAEQLHQILTQLSENRQTLLFSATLPSALAEFAKAGLREPQLVRLDVENKISPDLKLSFLTVRPEEKYSALLYLVREHISSDQQTLIFVSTKHHVEFVNSLFKLENIEPSVCYGDMDQDARKIHVSRFRARKTMLLIVTDIAARGIDIPLLDNVINWDFPPRPKIFVHRVGRAARAGRTGCAYSFVTPEDMPYMLDLHLFLSKPVRPAPTEDEVLKNMEEVMTKTSQAIDSGVTVYGRFPQKTIDLIFNRTREMIDSSAELDSLERTSTKAFRLYSKTKPSPSKESIRRAKDLPREGLHPIFRSIIETGELEAMSFFQKIKNFRPKQTILEAEGEVAKSKHVKGPAGQWVDVMKKKRAIHEEIINTRHQQNQKTSNNHLEMEAEPTTSFVDGTVEGSKVSGKKRKAQETFKDDEFFISSIPVNHHSEAGLSLRGNEGFGSNRLDAAVLDLVADDGQGIKQQQSNYHWDKKGKKYIKLNNGDRVTASGKIKTESGAKATAKKTGIYKRWQERSHKKVSRDSGDADETTRMSGRGGRDGKRRQGSVPNAHVRSEIKDLDQVRKERQQKANKVSYLQSKRGGRGGRGGARGGRGGGARGGRGGSRDFGGGGRDFGSSSDRGGRSGGRDFGGRRGGASTSSRGGKRGGGRGGGGKRGRGR.

The Q motif motif lies at 28 to 56 (GGFESLNLGPNVFNAIKKKGYKVPTPIQR). The Helicase ATP-binding domain occupies 59-232 (MPLILSGVDV…KAGLREPQLV (174 aa)). Position 72–79 (72–79 (ARTGSGKT)) interacts with ATP. The DEAD box signature appears at 180-183 (DEAD). One can recognise a Helicase C-terminal domain in the interval 256 to 411 (KYSALLYLVR…EVLKNMEEVM (156 aa)). The interval 675–845 (SGKIKTESGA…GGGGKRGRGR (171 aa)) is disordered. Basic and acidic residues-rich tracts occupy residues 696–716 (RWQERSHKKVSRDSGDADETT) and 738–754 (VRSEIKDLDQVRKERQQ). The segment covering 770 to 799 (GGRGGARGGRGGGARGGRGGSRDFGGGGRD) has biased composition (gly residues). The span at 806–817 (RGGRSGGRDFGG) shows a compositional bias: basic and acidic residues. A compositionally biased stretch (basic residues) spans 828–845 (GGKRGGGRGGGGKRGRGR).

This sequence belongs to the DEAD box helicase family. DDX54/DBP10 subfamily.

It catalyses the reaction ATP + H2O = ADP + phosphate + H(+). In Arabidopsis thaliana (Mouse-ear cress), this protein is Putative DEAD-box ATP-dependent RNA helicase 29 (RH29).